Here is a 431-residue protein sequence, read N- to C-terminus: MKILIKNVDVIYTADSNRSIIKNGYIIIQDNKIKEINDMDNLVYQSNDFDDVISGKGKMALPGLVNAHTHSAMTLLRGFADDMPLHKWLQEKIWPFEKTLIPEDIYWGAKLAILEMIKTGTTTFADMYFEMGQVAKVVEEGGLRAVLSQGLIEANDGEEGLNRALKFCLEWNNRADGRILTMLAPHAPYTCSPDFFRRVVDLSQEYNLGIHTHIAETKEEFQQIREKYDCTPLQYLEKTGALKRPVLAAHCIYITEEDMDLMAQKPIGVAYNPQSNMKLGSGIAPVTRMLSKGIKVGIGTDGTSSNNNLDLIEEARSGSFLQKVNDLDSTALPVDTVLKMLTVNGAKILGFDKLGVLKEGYLADIILIGLNESTFYYPHYNNLSNLFYAGSGNDVTTVIVNGRVIMKDREVLTINEEEVYYKIEEIARRKL.

Zn(2+) contacts are provided by His68 and His70. Substrate is bound by residues Glu97 and His186. Residue His213 coordinates Zn(2+). Glu216 and Asp301 together coordinate substrate. Residue Asp301 participates in Zn(2+) binding.

This sequence belongs to the metallo-dependent hydrolases superfamily. MTA/SAH deaminase family. Zn(2+) serves as cofactor.

It catalyses the reaction S-adenosyl-L-homocysteine + H2O + H(+) = S-inosyl-L-homocysteine + NH4(+). The catalysed reaction is S-methyl-5'-thioadenosine + H2O + H(+) = S-methyl-5'-thioinosine + NH4(+). In terms of biological role, catalyzes the deamination of 5-methylthioadenosine and S-adenosyl-L-homocysteine into 5-methylthioinosine and S-inosyl-L-homocysteine, respectively. Is also able to deaminate adenosine. This chain is 5-methylthioadenosine/S-adenosylhomocysteine deaminase, found in Halothermothrix orenii (strain H 168 / OCM 544 / DSM 9562).